A 443-amino-acid chain; its full sequence is Eukaryotic translation initiation factor 3 subunit M (443 aa).

Residues 205 to 375 form the PCI domain; sequence GLYQSTGNLA…SLIRIHSISS (171 aa). The interval 413–443 is disordered; sequence ETVAQQGLGQQRRGGKRREEKKEKEDKEEQE. Residues 429–443 show a composition bias toward basic and acidic residues; sequence RREEKKEKEDKEEQE.

Belongs to the eIF-3 subunit M family. Component of the eukaryotic translation initiation factor 3 (eIF-3) complex.

The protein resides in the cytoplasm. Component of the eukaryotic translation initiation factor 3 (eIF-3) complex, which is involved in protein synthesis of a specialized repertoire of mRNAs and, together with other initiation factors, stimulates binding of mRNA and methionyl-tRNAi to the 40S ribosome. The eIF-3 complex specifically targets and initiates translation of a subset of mRNAs involved in cell proliferation. In Cryptococcus neoformans var. neoformans serotype D (strain B-3501A) (Filobasidiella neoformans), this protein is Eukaryotic translation initiation factor 3 subunit M.